The primary structure comprises 118 residues: Basic phospholipase A2 acanthin-2 (118 aa).

Intrachain disulfides connect Cys11–Cys71, Cys27–Cys117, Cys29–Cys45, Cys44–Cys98, Cys51–Cys91, Cys60–Cys84, and Cys78–Cys89. Tyr28, Gly30, and Gly32 together coordinate Ca(2+). The active site involves His48. Position 49 (Asp49) interacts with Ca(2+). The active site involves Asp92.

Ca(2+) serves as cofactor. As to expression, expressed by the venom gland.

The protein resides in the secreted. The enzyme catalyses a 1,2-diacyl-sn-glycero-3-phosphocholine + H2O = a 1-acyl-sn-glycero-3-phosphocholine + a fatty acid + H(+). Snake venom phospholipase A2 (PLA2) that potently inhibits ADP-(IC(50)=12 nM) and collagen-induced (IC(50)=4 nM) platelet aggregation when tested on human whole blood. PLA2 catalyzes the calcium-dependent hydrolysis of the 2-acyl groups in 3-sn-phosphoglycerides. This chain is Basic phospholipase A2 acanthin-2, found in Acanthophis antarcticus (Common death adder).